Reading from the N-terminus, the 124-residue chain is UPF0382 membrane protein HI_1073 (124 aa).

Helical transmembrane passes span 6–26 (LTLV…AAHG), 70–90 (SMSS…ALAF), and 95–115 (VIVW…ISLA).

It belongs to the UPF0382 family.

It localises to the cell membrane. The polypeptide is UPF0382 membrane protein HI_1073 (Haemophilus influenzae (strain ATCC 51907 / DSM 11121 / KW20 / Rd)).